A 1802-amino-acid polypeptide reads, in one-letter code: U3 small nucleolar RNA-associated protein 10 (1802 aa).

An HEAT 1 repeat occupies 581-618 (MDLQALLPFVLVTLADPSERVRREAAGILTIIGSLHKN). The next 2 helical transmembrane spans lie at 946 to 966 (VQSG…AIVN) and 1002 to 1022 (ALLL…HSVM). 4 HEAT repeats span residues 1046-1083 (QTID…AFEH), 1253-1290 (LSLV…QNPE), 1297-1335 (TRML…KYGK), and 1758-1795 (ALLP…VLGE).

It belongs to the HEATR1/UTP10 family. As to quaternary structure, component of the ribosomal small subunit (SSU) processome.

The protein localises to the nucleus. It localises to the nucleolus. Its subcellular location is the membrane. Functionally, involved in nucleolar processing of pre-18S ribosomal RNA. Involved in ribosome biosynthesis. This is U3 small nucleolar RNA-associated protein 10 from Aspergillus oryzae (strain ATCC 42149 / RIB 40) (Yellow koji mold).